The chain runs to 152 residues: Lipoprotein signal peptidase (152 aa).

2 consecutive transmembrane segments (helical) span residues 55 to 75 (NKMW…VFYM) and 85 to 105 (LGIS…DRVF). Residues Asp-111 and Asp-129 contribute to the active site. The helical transmembrane segment at 124-144 (VFNIADSALCIGVVLIIIQTL) threads the bilayer.

This sequence belongs to the peptidase A8 family.

It is found in the cell membrane. It carries out the reaction Release of signal peptides from bacterial membrane prolipoproteins. Hydrolyzes -Xaa-Yaa-Zaa-|-(S,diacylglyceryl)Cys-, in which Xaa is hydrophobic (preferably Leu), and Yaa (Ala or Ser) and Zaa (Gly or Ala) have small, neutral side chains.. The protein operates within protein modification; lipoprotein biosynthesis (signal peptide cleavage). Its function is as follows. This protein specifically catalyzes the removal of signal peptides from prolipoproteins. In Bacillus cereus (strain B4264), this protein is Lipoprotein signal peptidase.